The chain runs to 485 residues: NADH-quinone oxidoreductase subunit N (485 aa).

The next 14 helical transmembrane spans lie at 8-28 (LIALLPLLIVGLTVVVVMLSI), 35-55 (FLNATLSVIGLNAALVSLWFV), 71-91 (GFAMLYTGLVLLASLATCTFA), 105-125 (FYLLVLIASLGGILLANANHL), 127-147 (ALFLGIELISLPLFGLIGYAF), 159-179 (YTILSAAASSFLLFGMALVYA), 203-223 (LLAGFGLMIVGLGFKLSLVPF), 235-255 (PAPVSTFLATASKIAIFGVVM), 271-291 (VVLGIIAFASIIFGNLMALSQ), 297-317 (LLGYSSISHLGYLLVALIALQ), 326-346 (VGVYLAGYLFSSLGAFGVVSL), 373-393 (AAVMTVMMLSLAGIPMTLGFI), 408-430 (WWLVAAVVVGSAIGLYYYLRVAV), and 455-475 (IVVLISALLVLVLGVWPQPLI).

Belongs to the complex I subunit 2 family. In terms of assembly, NDH-1 is composed of 13 different subunits. Subunits NuoA, H, J, K, L, M, N constitute the membrane sector of the complex.

It localises to the cell inner membrane. The catalysed reaction is a quinone + NADH + 5 H(+)(in) = a quinol + NAD(+) + 4 H(+)(out). Functionally, NDH-1 shuttles electrons from NADH, via FMN and iron-sulfur (Fe-S) centers, to quinones in the respiratory chain. The immediate electron acceptor for the enzyme in this species is believed to be ubiquinone. Couples the redox reaction to proton translocation (for every two electrons transferred, four hydrogen ions are translocated across the cytoplasmic membrane), and thus conserves the redox energy in a proton gradient. The chain is NADH-quinone oxidoreductase subunit N from Salmonella schwarzengrund (strain CVM19633).